Reading from the N-terminus, the 335-residue chain is Rho guanine nucleotide exchange factor 39 (335 aa).

The DH domain occupies 22–197 (KRACTARELL…SETAQRVHTI (176 aa)). Positions 227-331 (WFLRQGWLLV…WYHSLTLAIS (105 aa)) constitute a PH domain.

It is found in the cell membrane. Promotes cell proliferation. This is Rho guanine nucleotide exchange factor 39 (ARHGEF39) from Bos taurus (Bovine).